Here is a 426-residue protein sequence, read N- to C-terminus: Pistil-specific extensin-like protein (426 aa).

The N-terminal stretch at 1–23 (MAVIISSKVLLIQLFVLVLGSFS) is a signal peptide. Disordered stretches follow at residues 56–109 (GPTF…GSKL) and 121–254 (NLPD…AAEP). 4 stretches are compositionally biased toward pro residues: residues 60–94 (VLPP…PLIP), 123–161 (PDVP…PSPP), 168–224 (PPQP…PPPP), and 231–254 (LLPP…AAEP). 3 tandem repeats follow at residues 69-73 (SPPPP), 76-80 (SPPPP), and 83-87 (SPPPP). Residues 69–182 (SPPPPSPSPP…PAKQPSPPPP (114 aa)) are 4 X 5 AA repeats of S-P(4). Residues 178 to 182 (SPPPP) form repeat 4. Asparagine 310 is a glycosylation site (N-linked (GlcNAc...) asparagine).

As to expression, pistil (stigma and style tissue).

This is Pistil-specific extensin-like protein from Nicotiana tabacum (Common tobacco).